A 1969-amino-acid chain; its full sequence is Myosin-3 (1969 aa).

The 50-residue stretch at aspartate 33–proline 82 folds into the Myosin N-terminal SH3-like domain. Positions aspartate 86–aspartate 791 constitute a Myosin motor domain. The residue at position 130 (lysine 130) is an N6,N6,N6-trimethyllysine. Glycine 179–threonine 186 is a binding site for ATP. Actin-binding regions lie at residues leucine 667–glutamate 689 and lysine 770–alanine 784. Residues leucine 794–glycine 823 form the IQ domain. A coiled-coil region spans residues lysine 857–leucine 1969. Disordered stretches follow at residues methionine 942–histidine 966, asparagine 1006–lysine 1029, leucine 1131–valine 1213, and lysine 1234–arginine 1255. Basic and acidic residues-rich tracts occupy residues alanine 1137–glutamate 1164 and alanine 1176–asparagine 1197.

It belongs to the TRAFAC class myosin-kinesin ATPase superfamily. Myosin family. As to quaternary structure, muscle myosin is a hexameric protein that consists of 2 heavy chain subunits (MHC), 2 alkali light chain subunits (MLC) and 2 regulatory light chain subunits (MLC-2). As to expression, expressed in body wall muscles, neighboring vulval muscle cells and the contractile sheath covering the hermaphrodite gonad (myoepithelial sheath cells).

It localises to the cytoplasm. The protein resides in the myofibril. It is found in the sarcomere. The protein localises to the a band. In terms of biological role, essential for muscle contraction. Involved in ovulation likely by regulating the contraction of gonadal myoepithelial sheath cells. This is Myosin-3 (myo-3) from Caenorhabditis elegans.